Here is a 602-residue protein sequence, read N- to C-terminus: Aspartate--tRNA(Asp/Asn) ligase (602 aa).

An L-aspartate-binding site is contributed by glutamate 191. The aspartate stretch occupies residues 215 to 218; the sequence is QLYK. Residue arginine 237 coordinates L-aspartate. ATP-binding positions include 237–239 and glutamine 246; that span reads RDE. L-aspartate is bound at residue histidine 465. Residue glutamate 499 participates in ATP binding. Arginine 506 provides a ligand contact to L-aspartate. 551–554 contacts ATP; it reads GLDR.

Belongs to the class-II aminoacyl-tRNA synthetase family. Type 1 subfamily. In terms of assembly, homodimer.

The protein localises to the cytoplasm. It carries out the reaction tRNA(Asx) + L-aspartate + ATP = L-aspartyl-tRNA(Asx) + AMP + diphosphate. Aspartyl-tRNA synthetase with relaxed tRNA specificity since it is able to aspartylate not only its cognate tRNA(Asp) but also tRNA(Asn). Reaction proceeds in two steps: L-aspartate is first activated by ATP to form Asp-AMP and then transferred to the acceptor end of tRNA(Asp/Asn). The chain is Aspartate--tRNA(Asp/Asn) ligase from Treponema pallidum (strain Nichols).